Consider the following 318-residue polypeptide: Formimidoylglutamase (318 aa).

Residues His130, Asp155, His157, Asp159, Asp246, and Asp248 each coordinate Mn(2+).

The protein belongs to the arginase family. The cofactor is Mn(2+).

The catalysed reaction is N-formimidoyl-L-glutamate + H2O = formamide + L-glutamate. It participates in amino-acid degradation; L-histidine degradation into L-glutamate; L-glutamate from N-formimidoyl-L-glutamate (hydrolase route): step 1/1. Its function is as follows. Catalyzes the conversion of N-formimidoyl-L-glutamate to L-glutamate and formamide. The protein is Formimidoylglutamase of Photorhabdus laumondii subsp. laumondii (strain DSM 15139 / CIP 105565 / TT01) (Photorhabdus luminescens subsp. laumondii).